The primary structure comprises 477 residues: Protoporphyrinogen oxidase (477 aa).

Residues 9–14 (GGGISG), W42, 57–60 (GPRG), V257, A449, and 454–456 (VAV) contribute to the FAD site.

It belongs to the protoporphyrinogen/coproporphyrinogen oxidase family. Protoporphyrinogen oxidase subfamily. As to quaternary structure, monomer. Homodimer. The cofactor is FAD.

Its subcellular location is the mitochondrion inner membrane. The enzyme catalyses protoporphyrinogen IX + 3 O2 = protoporphyrin IX + 3 H2O2. The protein operates within porphyrin-containing compound metabolism; protoporphyrin-IX biosynthesis; protoporphyrin-IX from protoporphyrinogen-IX: step 1/1. Its activity is regulated as follows. Inhibited by acifluorfen. In terms of biological role, catalyzes the 6-electron oxidation of protoporphyrinogen-IX to form protoporphyrin-IX. This Mus musculus (Mouse) protein is Protoporphyrinogen oxidase (Ppox).